A 301-amino-acid polypeptide reads, in one-letter code: Helicase VP6-A (301 aa).

Disordered regions lie at residues 1-99 (MIDW…TTGT) and 163-208 (RRKE…TSVG). 3 stretches are compositionally biased toward basic and acidic residues: residues 8–30 (ESGK…KDGE), 37–55 (GQKK…DRRV), and 67–81 (GFRE…RGDG). Lys-82 lines the ATP pocket. 2 stretches are compositionally biased toward basic and acidic residues: residues 163-177 (RRKE…VAEK) and 186-202 (VHGD…KTPE).

It belongs to the orbivirus VP6 family. In terms of assembly, homohexamer.

Its subcellular location is the virion. The enzyme catalyses ATP + H2O = ADP + phosphate + H(+). Its function is as follows. ATP dependent RNA helicase essential for RNA packaging and viral transcription. Possesses ss- and dsRNA-binding capacity. The chain is Helicase VP6-A (Segment-9) from Bluetongue virus 2 (isolate USA) (BTV 2).